Reading from the N-terminus, the 422-residue chain is La-related protein 6A (422 aa).

The disordered stretch occupies residues 1 to 94 (MSSLPLRSGE…DHGENPVETD (94 aa)). The span at 48-61 (VTESSDDVVVNVSE) shows a compositional bias: low complexity. A compositionally biased stretch (basic and acidic residues) spans 73–89 (DHERNSGEDRDQDHGEN). One can recognise an HTH La-type RNA-binding domain in the interval 97-188 (VVPIDELNQK…KRLSPLPEIR (92 aa)). The RRM domain occupies 193 to 283 (FTVLVENLPE…NGLRVKLLEQ (91 aa)). Residues 286-422 (GKFAQRRPAR…PTSTQTSHEV (137 aa)) are disordered. The span at 295–348 (RREVDKEKDTTGRVHDQTGGEKNKKTREHQNHRLHHSDNPADDDGGNHQKDKNG) shows a compositional bias: basic and acidic residues.

Its subcellular location is the nucleus. Functionally, transcriptional regulator. This Arabidopsis thaliana (Mouse-ear cress) protein is La-related protein 6A (LARP6A).